A 99-amino-acid chain; its full sequence is Small ribosomal subunit protein bS20 (99 aa).

It belongs to the bacterial ribosomal protein bS20 family.

In terms of biological role, binds directly to 16S ribosomal RNA. The polypeptide is Small ribosomal subunit protein bS20 (Caldicellulosiruptor bescii (strain ATCC BAA-1888 / DSM 6725 / KCTC 15123 / Z-1320) (Anaerocellum thermophilum)).